Here is a 25-residue protein sequence, read N- to C-terminus: Aggression-stimulating peptide (25 aa).

As to expression, expressed by the skin glands of male frogs.

The protein localises to the secreted. Stimulates aggressive behavior in male frogs. No effect on female frogs. This is Aggression-stimulating peptide from Leptodactylus fallax (Mountain chicken frog).